Consider the following 1829-residue polypeptide: MAASELYTKYARVWIPDPEEVWKSAELLKDYKPGDKVLQLRLEEGKDLEYCLDPKTKELPPLRNPDILVGENDLTALSYLHEPAVLHNLKVRFIDSKLIYTYCGIVLVAINPYEQLPIYGEDIINAYSGQNMGDMDPHIFAVAEEAYKQMARDERNQSIIVSGESGAGKTVSAKYAMRYFATVSGSASEANVEEKVLASNPIMESIGNAKTTRNDNSSRFGKYIEIGFDKRYRIIGANMRTYLLEKSRVVFQAEEERNYHIFYQLCASAALPEFKTLRLGNANYFHYTKQGGSPVIDGIDDAKEMVNTRQACTLLGISDSYQMGIFRILAGILHLGNVEFASRDSDSCAIPPKHDPLTIFCDLMGVDYEEMAHWLCHRKLATATETYIKPISKLHAINARDALAKHIYANLFNWIVDHVNKALHSTVKQHSFIGVLDIYGFETFEINSFEQFCINYANEKLQQQFNMHVFKLEQEEYMKEQIPWTLIDFYDNQPCINLIEAKMGVLDLLDEECKMPKGSDDTWAQKLYNTHLNKCALFEKPRLSNKAFIIKHFADKVEYQCEGFLEKNKDTVYEEQIKVLKSSKKFKLLPELFQDEEKAISPTSATPSGRVPLSRTPVKPAKARPGQTSKEHKKTVGHQFRNSLHLLMETLNATTPHYVRCIKPNDFKFPFTFDEKRAVQQLRACGVLETIRISAAGFPSRWTYQEFFSRYRVLMKQKDVLSDRKQTCKNVLEKLILDKDKYQFGKTKIFFRAGQVAYLEKIRADKLRAACIRIQKTIRGWLMRKKYMRMRRAAITIQRYVRGHQARCYATFLRRTRAAIIIQKFQRMYVVRKRYQCMRDATIALQALLRGYLVRNKYQMMLREHKSIIIQKHVRGWLARVHYHRTLKAIVYLQCCYRRMMAKRELKKLKIEARSVERYKKLHIGLENKIMQLQRKIDEQNKEYKSLLEKMNNLEITYSTETEKLRSDVERLRMSEEEAKNATNRVLSLQEEIAKLRKELHQTQTEKKTIEEWADKYKHETEQLVSELKEQNTLLKTEKEELNRRIHDQAKEITETMEKKLVEETKQLELDLNDERLRYQNLLNEFSRLEERYDDLKDEMNLMVSIPKPGHKRTDSTHSSNESEYTFSSEITEAEDLPLRMEEPSEKKAPLDMSLFLKLQKRVTELEQEKQSLQDELDRKEEQALRAKAKEEERPPIRGAELEYESLKRQELESENKKLKNELNELQKALTETRAPEVTAPGAPAYRVLLDQLTSVSEELEVRKEEVLILRSQLVSQKEAIQPKEDKNTMTDSTILLEDVQKMKDKGEIAQAYIGLKETNRLLESQLQSQKKSHENELESLRGEIQSLKEENNRQQQLLAQNLQLPPEARIEASLQHEITRLTNENLDLMEQLEKQDKTVRKLKKQLKVFAKKIGELEVGQMENISPGQIIDEPIRPVNIPRKEKDFQGMLEYKKEDEQKLVKNLILELKPRGVAVNLIPGLPAYILFMCVRHADYLNDDQKVRSLLTSTINGIKKVLKKRGDDFETVSFWLSNTCRFLHCLKQYSGEEGFMKHNTPRQNEHCLTNFDLAEYRQVLSDLAIQIYQQLVRVLENILQPMIVSGMLEHETIQGVSGVKPTGLRKRTSSIADEGTYTLDSIIRQLNSFHSVMCQHGMDPELIKQVVKQMFYIIGAVTLNNLLLRKDMCSWSKGMQIRYNVSQLEEWLRDKNLMNSGAKETLEPLIQAAQLLQVKKKTDEDAEAICSMCNALTTAQIVKVLNLYTPVNEFEERVLVSFIRTIQLRLRDRKDSPQLLMDAKHIFPVTFPFNPSSLALETIQIPASLGLGFISRV.

Residues 8-60 (TKYARVWIPDPEEVWKSAELLKDYKPGDKVLQLRLEEGKDLEYCLDPKTKELP) form the Myosin N-terminal SH3-like domain. The region spanning 69–764 (VGENDLTALS…QVAYLEKIRA (696 aa)) is the Myosin motor domain. 163-170 (GESGAGKT) provides a ligand contact to ATP. Positions 599–635 (AISPTSATPSGRVPLSRTPVKPAKARPGQTSKEHKKT) are disordered. The actin-binding stretch occupies residues 644 to 666 (LHLLMETLNATTPHYVRCIKPND). IQ domains are found at residues 767-789 (LRAA…KYMR), 790-814 (MRRA…TFLR), 815-837 (RTRA…RYQC), 838-862 (MRDA…QMML), 863-887 (REHK…HRTL), and 888-915 (KAIV…EARS). 2 coiled-coil regions span residues 916 to 1239 (VERY…PEVT) and 1315 to 1419 (GLKE…ELEV). 2 disordered regions span residues 1106–1148 (IPKP…SEKK) and 1170–1199 (KQSL…PIRG). Residues 1117–1131 (THSSNESEYTFSSEI) are compositionally biased toward polar residues. 2 stretches are compositionally biased toward basic and acidic residues: residues 1137–1148 (LPLRMEEPSEKK) and 1170–1196 (KQSL…ERPP). Residues 1508-1784 (TSTINGIKKV…IRTIQLRLRD (277 aa)) form the Dilute domain. Thr-1734 carries the phosphothreonine modification.

Belongs to the TRAFAC class myosin-kinesin ATPase superfamily. Myosin family. May be a homodimer, which associates with multiple calmodulin or myosin light chains. Neuronal and non-neuronal cells of the brain.

The protein localises to the golgi apparatus membrane. The enzyme catalyses ATP + H2O = ADP + phosphate + H(+). Its function is as follows. Processive actin-based motor that can move in large steps approximating the 36-nm pseudo-repeat of the actin filament. Can hydrolyze ATP in the presence of actin, which is essential for its function as a motor protein. Involved in melanosome transport. Also mediates the transport of vesicles to the plasma membrane. May also be required for some polarization process involved in dendrite formation. This Gallus gallus (Chicken) protein is Unconventional myosin-Va (MYO5A).